The primary structure comprises 812 residues: Valine--tRNA ligase (812 aa).

A 'HIGH' region motif is present at residues 46–56 (PTVSGQLHIGH). A 'KMSKS' region motif is present at residues 536-540 (KMSKS). Lys539 is a binding site for ATP.

The protein belongs to the class-I aminoacyl-tRNA synthetase family. ValS type 2 subfamily. Monomer.

The protein localises to the cytoplasm. It catalyses the reaction tRNA(Val) + L-valine + ATP = L-valyl-tRNA(Val) + AMP + diphosphate. Catalyzes the attachment of valine to tRNA(Val). As ValRS can inadvertently accommodate and process structurally similar amino acids such as threonine, to avoid such errors, it has a 'posttransfer' editing activity that hydrolyzes mischarged Thr-tRNA(Val) in a tRNA-dependent manner. The chain is Valine--tRNA ligase from Rickettsia bellii (strain OSU 85-389).